We begin with the raw amino-acid sequence, 66 residues long: ITYTDCTESGQNLCLCEGSNVCGKGNKCILGSQGKDNQCVTGEGTPKPQSHNQGDFEPIPEDAYDE.

The interaction with thrombin active site stretch occupies residues 1-3 (ITY). 3 disulfides stabilise this stretch: C6–C14, C16–C28, and C22–C39. The segment at 39–66 (CVTGEGTPKPQSHNQGDFEPIPEDAYDE) is disordered. A glycan (O-linked (GalNAc...) threonine) is linked at T45. The interval 55 to 66 (DFEPIPEDAYDE) is interaction with fibrinogen-binding exosite of thrombin. Y64 is subject to Sulfotyrosine.

It belongs to the protease inhibitor I14 (hirudin) family.

The protein localises to the secreted. In terms of biological role, hirudin is a potent thrombin-specific protease inhibitor. It forms a stable non-covalent complex with alpha-thrombin, thereby abolishing its ability to cleave fibrinogen. The protein is Hirudin-PA of Hirudo medicinalis (Medicinal leech).